A 1376-amino-acid chain; its full sequence is Phospholipid-transporting ATPase DRS2 (1376 aa).

Residues 1 to 10 (MAGRPTGGPQ) are compositionally biased toward gly residues. 2 disordered regions span residues 1-151 (MAGR…AAAR) and 180-217 (GYSE…PKRD). Residues 1 to 306 (MAGRPTGGPQ…QIPGLSPTNR (306 aa)) lie on the Cytoplasmic side of the membrane. Residues 40 to 50 (DLMRTYTRDQE) are compositionally biased toward basic and acidic residues. The span at 85–96 (QSSSSNNNNNNN) shows a compositional bias: low complexity. Residues 97 to 115 (VSAPYSRSGRQYSQTSDLG) show a composition bias toward polar residues. A compositionally biased stretch (gly residues) spans 191–203 (PGGGGGGAGGGGH). Residues 307-327 (FTTIIPLVAVLMVSAGKELVE) form a helical membrane-spanning segment. The Extracellular segment spans residues 328–509 (DYRRKQADAA…KVEKKLNTLV (182 aa)). Residues asparagine 339, asparagine 433, and asparagine 490 are each glycosylated (N-linked (GlcNAc...) asparagine). A helical membrane pass occupies residues 510-530 (LLLVGILMVLSIISTVGDLII). Residues 531 to 559 (RRVEGDAISYLMLDQPDTAGKIAETFFKD) lie on the Cytoplasmic side of the membrane. Residues 560 to 580 (MVTYWVLFSSLVPISLFVTVE) form a helical membrane-spanning segment. At 581–1107 (MVKYWHGILI…VFSGAVIYES (527 aa)) the chain is on the extracellular side. The active-site 4-aspartylphosphate intermediate is the aspartate 625. ATP contacts are provided by aspartate 625, lysine 626, and threonine 627. Aspartate 625 contributes to the Mg(2+) binding site. Residue threonine 627 participates in Mg(2+) binding. The N-linked (GlcNAc...) asparagine glycan is linked to asparagine 679. Residues glutamate 720 and phenylalanine 761 each coordinate ATP. Asparagine 762 carries N-linked (GlcNAc...) asparagine glycosylation. ATP contacts are provided by serine 763, lysine 766, lysine 784, arginine 817, threonine 818, threonine 898, glycine 899, aspartate 900, arginine 991, and lysine 997. A Mg(2+)-binding site is contributed by aspartate 1018. ATP is bound by residues asparagine 1021 and aspartate 1022. Aspartate 1022 is a Mg(2+) binding site. Asparagine 1083 carries an N-linked (GlcNAc...) asparagine glycan. Residues 1108-1128 (WTLTFYNVFYTVLPPLALGIL) traverse the membrane as a helical segment. At 1129–1165 (DQFISARLLDRYPQLYSMGQQNQFFRMKVFIEWLLNA) the chain is on the cytoplasmic side. Residues 1166–1186 (VYHSIILYVFGELIWHGDLIL) traverse the membrane as a helical segment. Over 1187 to 1190 (ENGQ) the chain is Extracellular. Residues 1191-1211 (IAGHWMWGTALYAPVLLTVLG) form a helical membrane-spanning segment. Position 1212 (lysine 1212) interacts with a 1,2-diacyl-sn-glycero-3-phospho-(1D-myo-inositol 4-phosphate). Topologically, residues 1212–1224 (KAGLVTSNWTKYH) are cytoplasmic. A helical transmembrane segment spans residues 1225–1245 (VIAIPGSMAIWWIFIAVYGTV). Residues 1246–1257 (APMIPFSPEFHG) lie on the Extracellular side of the membrane. A helical transmembrane segment spans residues 1258 to 1278 (IVPKLYSSPIFWLQSFALAIL). Over 1279-1376 (CLLRDFAWKY…TSSRPQGQGT (98 aa)) the chain is Cytoplasmic. The a 1,2-diacyl-sn-glycero-3-phospho-(1D-myo-inositol 4-phosphate) site is built by arginine 1282, tryptophan 1286, lysine 1287, tyrosine 1298, and histidine 1299.

The protein belongs to the cation transport ATPase (P-type) (TC 3.A.3) family. Type IV subfamily. It depends on Mg(2+) as a cofactor.

It localises to the cell membrane. The protein localises to the golgi apparatus. It is found in the trans-Golgi network membrane. It carries out the reaction ATP + H2O + phospholipidSide 1 = ADP + phosphate + phospholipidSide 2.. The catalysed reaction is a 1,2-diacyl-sn-glycero-3-phospho-L-serine(out) + ATP + H2O = a 1,2-diacyl-sn-glycero-3-phospho-L-serine(in) + ADP + phosphate + H(+). It catalyses the reaction a 1,2-diacyl-sn-glycero-3-phosphoethanolamine(out) + ATP + H2O = a 1,2-diacyl-sn-glycero-3-phosphoethanolamine(in) + ADP + phosphate + H(+). Its function is as follows. Catalytic component of a P4-ATPase flippase complex which catalyzes the hydrolysis of ATP coupled to the transport of phosphatidylserine and small amounts of ethanolamine from the lumen to the cytosolic leaflet of the trans-Golgi network and cell membrane and ensures the maintenance of asymmetric distribution of phospholipids. Required for efficient vesicle transport during toxin secretion. The sequence is that of Phospholipid-transporting ATPase DRS2 (DRS2) from Verticillium dahliae (strain VdLs.17 / ATCC MYA-4575 / FGSC 10137) (Verticillium wilt).